Consider the following 317-residue polypeptide: tRNA dimethylallyltransferase (317 aa).

Residue 14-21 coordinates ATP; it reads GPTAVGKT. Position 16–21 (16–21) interacts with substrate; the sequence is TAVGKT. The interval 39–42 is interaction with substrate tRNA; that stretch reads DSMQ.

This sequence belongs to the IPP transferase family. Monomer. Mg(2+) serves as cofactor.

The enzyme catalyses adenosine(37) in tRNA + dimethylallyl diphosphate = N(6)-dimethylallyladenosine(37) in tRNA + diphosphate. Its function is as follows. Catalyzes the transfer of a dimethylallyl group onto the adenine at position 37 in tRNAs that read codons beginning with uridine, leading to the formation of N6-(dimethylallyl)adenosine (i(6)A). This chain is tRNA dimethylallyltransferase, found in Bacillus cereus (strain ATCC 14579 / DSM 31 / CCUG 7414 / JCM 2152 / NBRC 15305 / NCIMB 9373 / NCTC 2599 / NRRL B-3711).